The sequence spans 100 residues: Large ribosomal subunit protein bL21 (100 aa).

It belongs to the bacterial ribosomal protein bL21 family. As to quaternary structure, part of the 50S ribosomal subunit. Contacts protein L20.

Its function is as follows. This protein binds to 23S rRNA in the presence of protein L20. This Paramagnetospirillum magneticum (strain ATCC 700264 / AMB-1) (Magnetospirillum magneticum) protein is Large ribosomal subunit protein bL21.